The sequence spans 331 residues: DNA-directed RNA polymerase subunit alpha (331 aa).

An alpha N-terminal domain (alpha-NTD) region spans residues 1 to 237; it reads MQSFEKEFLK…DQLSSFIDLK (237 aa). The interval 251-331 is alpha C-terminal domain (alpha-CTD); that stretch reads FDPSLLNLVD…NWPPKHLSEQ (81 aa).

Belongs to the RNA polymerase alpha chain family. In terms of assembly, homodimer. The RNAP catalytic core consists of 2 alpha, 1 beta, 1 beta' and 1 omega subunit. When a sigma factor is associated with the core the holoenzyme is formed, which can initiate transcription.

The enzyme catalyses RNA(n) + a ribonucleoside 5'-triphosphate = RNA(n+1) + diphosphate. Functionally, DNA-dependent RNA polymerase catalyzes the transcription of DNA into RNA using the four ribonucleoside triphosphates as substrates. This Blochmanniella floridana protein is DNA-directed RNA polymerase subunit alpha.